The chain runs to 633 residues: Chaperone protein dnaK2 (633 aa).

Thr-197 is modified (phosphothreonine; by autocatalysis). The disordered stretch occupies residues 600-633 (SNAASQAADGTSSESNNSTEGNDDVIDAEFTESK). The span at 608–619 (DGTSSESNNSTE) shows a compositional bias: low complexity. Residues 620–633 (GNDDVIDAEFTESK) show a composition bias toward acidic residues.

This sequence belongs to the heat shock protein 70 family.

Functionally, acts as a chaperone. This Prochlorococcus marinus (strain SARG / CCMP1375 / SS120) protein is Chaperone protein dnaK2 (dnaK2).